Reading from the N-terminus, the 171-residue chain is MAELDIQISVDDIGWPGEETLLSFCERVLGAAVIYLRDSEKQPFPTMPPEVSLVFTDDASIQDINAEWRGKDKATNVLSFPAFPVRPGKMPGPMLGDIIIARETVERETIELEKSFDDHLTHLLVHGFLHLLGYDHMNSDEAEIMEGLETRILAQLGLSDPYEGQDLKMEP.

3 residues coordinate Zn(2+): H126, H130, and H136.

It belongs to the endoribonuclease YbeY family. Requires Zn(2+) as cofactor.

The protein localises to the cytoplasm. Functionally, single strand-specific metallo-endoribonuclease involved in late-stage 70S ribosome quality control and in maturation of the 3' terminus of the 16S rRNA. The polypeptide is Endoribonuclease YbeY (Rhizobium leguminosarum bv. trifolii (strain WSM2304)).